Reading from the N-terminus, the 271-residue chain is Phosphate import ATP-binding protein PstB 2 (271 aa).

The region spanning 25-266 is the ABC transporter domain; sequence MATEDLHVYY…PQEKQTEDYI (242 aa). 57-64 serves as a coordination point for ATP; sequence GPSGCGKS.

The protein belongs to the ABC transporter superfamily. Phosphate importer (TC 3.A.1.7) family. The complex is composed of two ATP-binding proteins (PstB), two transmembrane proteins (PstC and PstA) and a solute-binding protein (PstS).

It is found in the cell membrane. The catalysed reaction is phosphate(out) + ATP + H2O = ADP + 2 phosphate(in) + H(+). In terms of biological role, part of the ABC transporter complex PstSACB involved in phosphate import. Responsible for energy coupling to the transport system. The protein is Phosphate import ATP-binding protein PstB 2 of Listeria monocytogenes serovar 1/2a (strain ATCC BAA-679 / EGD-e).